We begin with the raw amino-acid sequence, 184 residues long: Lysozyme 1 (184 aa).

The signal sequence occupies residues 1–20 (MNGLILFCAVVFATAVCTYG). Residues 69–184 (TGMVSQQCLR…WRRVQAQGCN (116 aa)) enclose the I-type lysozyme domain. 6 disulfide bridges follow: Cys-76–Cys-152, Cys-81–Cys-87, Cys-92–Cys-101, Cys-114–Cys-134, Cys-124–Cys-130, and Cys-148–Cys-166. The Proton donor role is filled by Glu-84. Asp-95 acts as the Nucleophile in catalysis. Substrate is bound at residue 107–113 (KRAYWID). Residues Tyr-138 and 159-161 (HNG) each bind substrate.

Hemolymph, labial palps, non-vesiculated cells of mantle connective tissue, cells of interlamellar junctions and epithelia surrounding the water tubes of the gills.

It is found in the secreted. It catalyses the reaction Hydrolysis of (1-&gt;4)-beta-linkages between N-acetylmuramic acid and N-acetyl-D-glucosamine residues in a peptidoglycan and between N-acetyl-D-glucosamine residues in chitodextrins.. Functionally, has antibacterial activity against the Gram-positive bacteria L.garvieae, M.luteus and Enterococcus sp., and the Gram-negative bacteria E.coli and V.vulnificus. Weak antibacterial activity against the Gram-negative bacterium A.hydrophila. No antibacterial activity detected against the Gram-positive bacterium S.iniae or against the Gram-negative bacterium E.ictaluri. Shows some chitinase activity but no isopeptidase activity. This Crassostrea virginica (Eastern oyster) protein is Lysozyme 1.